The chain runs to 189 residues: Peptidyl-tRNA hydrolase (189 aa).

TRNA is bound at residue Tyr16. Residue His21 is the Proton acceptor of the active site. TRNA-binding residues include Phe67, Asn69, and Asn115.

It belongs to the PTH family. As to quaternary structure, monomer.

Its subcellular location is the cytoplasm. The catalysed reaction is an N-acyl-L-alpha-aminoacyl-tRNA + H2O = an N-acyl-L-amino acid + a tRNA + H(+). Hydrolyzes ribosome-free peptidyl-tRNAs (with 1 or more amino acids incorporated), which drop off the ribosome during protein synthesis, or as a result of ribosome stalling. Functionally, catalyzes the release of premature peptidyl moieties from peptidyl-tRNA molecules trapped in stalled 50S ribosomal subunits, and thus maintains levels of free tRNAs and 50S ribosomes. This is Peptidyl-tRNA hydrolase from Legionella pneumophila (strain Corby).